Here is a 709-residue protein sequence, read N- to C-terminus: Polyribonucleotide nucleotidyltransferase (709 aa).

Mg(2+)-binding residues include D485 and D491. One can recognise a KH domain in the interval 552-611 (PRIYTMKIDPKKIKDVIGKGGATIRSLTEETGTSIDIDDDGTVKIAAVDSNAAKNVMGRI). An S1 motif domain is found at 621-689 (GAIYKGKVTR…RQGRIRLTMK (69 aa)).

Belongs to the polyribonucleotide nucleotidyltransferase family. As to quaternary structure, component of the RNA degradosome, which is a multiprotein complex involved in RNA processing and mRNA degradation. Mg(2+) is required as a cofactor.

The protein resides in the cytoplasm. The catalysed reaction is RNA(n+1) + phosphate = RNA(n) + a ribonucleoside 5'-diphosphate. Involved in mRNA degradation. Catalyzes the phosphorolysis of single-stranded polyribonucleotides processively in the 3'- to 5'-direction. The protein is Polyribonucleotide nucleotidyltransferase of Haemophilus influenzae (strain PittGG).